We begin with the raw amino-acid sequence, 320 residues long: Ferrochelatase (320 aa).

Residues His194 and Glu275 each contribute to the Fe cation site.

Belongs to the ferrochelatase family. As to quaternary structure, monomer.

Its subcellular location is the cytoplasm. It carries out the reaction heme b + 2 H(+) = protoporphyrin IX + Fe(2+). Its pathway is porphyrin-containing compound metabolism; protoheme biosynthesis; protoheme from protoporphyrin-IX: step 1/1. Its function is as follows. Catalyzes the ferrous insertion into protoporphyrin IX. The chain is Ferrochelatase from Salmonella paratyphi A (strain ATCC 9150 / SARB42).